Here is a 497-residue protein sequence, read N- to C-terminus: Probable D-lactate dehydrogenase, mitochondrial (497 aa).

One can recognise an FAD-binding PCMH-type domain in the interval 65 to 246 (HRCRPPDVVV…TKATLRLYGV (182 aa)).

This sequence belongs to the FAD-binding oxidoreductase/transferase type 4 family. It depends on FAD as a cofactor.

Its subcellular location is the mitochondrion. It catalyses the reaction (R)-lactate + 2 Fe(III)-[cytochrome c] = 2 Fe(II)-[cytochrome c] + pyruvate + 2 H(+). Its function is as follows. Involved in D-lactate, but not L-lactate catabolic process. This is Probable D-lactate dehydrogenase, mitochondrial (ldhd) from Danio rerio (Zebrafish).